The following is a 305-amino-acid chain: Homoserine O-acetyltransferase (305 aa).

Cysteine 142 functions as the Acyl-thioester intermediate in the catalytic mechanism. Residues lysine 163 and serine 192 each contribute to the substrate site. Histidine 235 serves as the catalytic Proton acceptor. Glutamate 237 is an active-site residue. Arginine 249 is a substrate binding site.

It belongs to the MetA family.

The protein resides in the cytoplasm. The catalysed reaction is L-homoserine + acetyl-CoA = O-acetyl-L-homoserine + CoA. Its pathway is amino-acid biosynthesis; L-methionine biosynthesis via de novo pathway; O-acetyl-L-homoserine from L-homoserine: step 1/1. Functionally, transfers an acetyl group from acetyl-CoA to L-homoserine, forming acetyl-L-homoserine. This Hyphomonas neptunium (strain ATCC 15444) protein is Homoserine O-acetyltransferase.